Consider the following 119-residue polypeptide: MECSASAPEGREEAWISFGKHNNRVCLMETRGHGIVGPDPGTLNPEQLEQLRDFKIQTRIANEKYLRTHKEVSLLISGFFREMFLKRPDNILEFAAHYFTDPRLPSRIHMQLIKEKKGT.

The 35-residue stretch at 70–104 (KEVSLLISGFFREMFLKRPDNILEFAAHYFTDPRL) folds into the RIIa domain.

Abundant in tissues rich in highly ciliated cells, such as testis, trachea and olfactory epithelium.

This is RIIa domain-containing protein 1 (Riiad1) from Mus musculus (Mouse).